The sequence spans 469 residues: Keratin, type II cytoskeletal 7 (469 aa).

S2 carries the N-acetylserine modification. Residues S2, S6, and S7 each carry the phosphoserine modification. The head stretch occupies residues 2–90 (SIHFSSPVFT…DPSLQRVRQE (89 aa)). S12 carries O-linked (GlcNAc) serine glycosylation. R20 carries the post-translational modification Dimethylated arginine; alternate. At R20 the chain carries Omega-N-methylarginine; alternate. S53, S71, and S83 each carry phosphoserine. The interval 90-126 (EEREQIKTLNNKFASFIDKVRFLEQQNKLLETKWTLL) is coil 1A. One can recognise an IF rod domain in the interval 91–403 (EREQIKTLNN…KLLEGEESRL (313 aa)). Residue T97 is modified to Phosphothreonine. The linker 1 stretch occupies residues 127-144 (QEQKSAKSSRLPDIFEAQ). A Glycyl lysine isopeptide (Lys-Gly) (interchain with G-Cter in SUMO2) cross-link involves residue K130. Residues 145–236 (IAGLRGQLEA…TLNETELTEL (92 aa)) are coil 1B. K179 carries the post-translational modification N6-acetyllysine. Positions 237 to 260 (QSQISDTSVVLSMDNSRSLDLDGI) are linker 12. Residues S252 and S254 each carry the phosphoserine modification. The coil 2 stretch occupies residues 261–399 (IAEVKAQYEE…ATYRKLLEGE (139 aa)). Residues K265 and K286 each participate in a glycyl lysine isopeptide (Lys-Gly) (interchain with G-Cter in SUMO2) cross-link. T289 carries the phosphothreonine modification. Glycyl lysine isopeptide (Lys-Gly) (interchain with G-Cter in SUMO2) cross-links involve residues K296 and K331. The interval 400–469 (ESRLAGDGVG…ASASRRSARN (70 aa)) is tail.

The protein belongs to the intermediate filament family. As to quaternary structure, heterotetramer of two type I and two type II keratins. Interacts with eukaryotic translation initiator factor 3 (eIF3) subunit EIF3S10. Interacts with GPER1. Arg-20 is dimethylated, probably to asymmetric dimethylarginine.

Functionally, blocks interferon-dependent interphase and stimulates DNA synthesis in cells. The sequence is that of Keratin, type II cytoskeletal 7 from Pan troglodytes (Chimpanzee).